We begin with the raw amino-acid sequence, 136 residues long: Thiosulfate sulfurtransferase 18 (136 aa).

Residues 26-128 enclose the Rhodanese domain; sequence LQSGHQYLDV…WVDHSFPINT (103 aa). Residue Cys88 is the Cysteine persulfide intermediate of the active site.

It localises to the cytoplasm. The enzyme catalyses thiosulfate + hydrogen cyanide = thiocyanate + sulfite + 2 H(+). Functionally, catalyzes the transfer of a sulfur ion from a donor to cyanide or to other thiol compounds. Substrate preference is thiosulfate &gt; 3-mercaptopyruvate. This Arabidopsis thaliana (Mouse-ear cress) protein is Thiosulfate sulfurtransferase 18 (STR18).